Consider the following 429-residue polypeptide: GTPase Obg (429 aa).

One can recognise an Obg domain in the interval 1-158 (MFVDQVKIYV…RNVQLELKVL (158 aa)). The interval 124-145 (RGNKRFATPANPAPELSENGEP) is disordered. The OBG-type G domain occupies 159–329 (ADVGLVGFPS…LLLAIADKLE (171 aa)). GTP-binding positions include 165 to 172 (GFPSVGKS), 190 to 194 (FTTIV), 212 to 215 (DLPG), 282 to 285 (NKMD), and 310 to 312 (SAV). Positions 172 and 192 each coordinate Mg(2+). Positions 351–429 (KYVAEEPDFE…LLDYEFEFMD (79 aa)) constitute an OCT domain.

The protein belongs to the TRAFAC class OBG-HflX-like GTPase superfamily. OBG GTPase family. In terms of assembly, monomer. Mg(2+) is required as a cofactor.

It localises to the cytoplasm. Functionally, an essential GTPase which binds GTP, GDP and possibly (p)ppGpp with moderate affinity, with high nucleotide exchange rates and a fairly low GTP hydrolysis rate. Plays a role in control of the cell cycle, stress response, ribosome biogenesis and in those bacteria that undergo differentiation, in morphogenesis control. The protein is GTPase Obg of Listeria monocytogenes serotype 4b (strain F2365).